The primary structure comprises 1049 residues: Self-sufficient cytochrome P450 monooxygenase CYP505E4 (1049 aa).

Cys405 provides a ligand contact to heme. Residues 462–492 (ATALSQHNMSAGATSSPGSSAHPAGNKNAQD) are disordered. The segment covering 471–486 (SAGATSSPGSSAHPAG) has biased composition (low complexity). In terms of domain architecture, Flavodoxin-like spans 499–640 (ISFFYGSNSG…DLEVWEETNL (142 aa)). Residues 505-509 (SNSGT) and 584-616 (VFGCGHQDWTKTFYRIPILIDDLMHKAGATRLT) contribute to the FMN site. The FAD-binding FR-type domain maps to 678–906 (RDLIEGKVTA…RPAKEAFHLP (229 aa)).

The protein in the N-terminal section; belongs to the cytochrome P450 family. FAD serves as cofactor. FMN is required as a cofactor. The cofactor is heme.

It carries out the reaction 2 oxidized [cytochrome P450] + NADPH = 2 reduced [cytochrome P450] + NADP(+) + H(+). The enzyme catalyses an organic molecule + reduced [NADPH--hemoprotein reductase] + O2 = an alcohol + oxidized [NADPH--hemoprotein reductase] + H2O + H(+). The catalysed reaction is dodecanoate + reduced [NADPH--hemoprotein reductase] + O2 = 5-hydroxydodecanoate + oxidized [NADPH--hemoprotein reductase] + H2O + H(+). It catalyses the reaction tetradecanoate + reduced [NADPH--hemoprotein reductase] + O2 = 7-hydroxytetradecanoate + oxidized [NADPH--hemoprotein reductase] + H2O + H(+). It carries out the reaction dodecan-1-ol + reduced [NADPH--hemoprotein reductase] + O2 = 1,5-dodecanediol + oxidized [NADPH--hemoprotein reductase] + H2O + H(+). The enzyme catalyses dodecan-1-ol + reduced [NADPH--hemoprotein reductase] + O2 = 1,4-dodecanediol + oxidized [NADPH--hemoprotein reductase] + H2O + H(+). The catalysed reaction is dodecan-1-ol + reduced [NADPH--hemoprotein reductase] + O2 = 1,6-dodecanediol + oxidized [NADPH--hemoprotein reductase] + H2O + H(+). Its function is as follows. Self-sufficient cytochrome P450 monooxygenase that catalyzes the regioselective in-chain hydroxylation of alkanes, fatty alcohols, and fatty acids at the omega-7 position. Performs hydroxylation of C10-C16 n-alkanes and C12 and C14 fatty alcohols; and thereby enables the one step biocatalytic synthesis of rare alcohols such as 5-dodecanol and 7-tetradecanol. Converts 1-dodecanol into 1,5-dodecanediol as major product with very little sub-terminally hydroxylated products with the 1,4-dodecanediol and 1,6-dodecanediol more abundant. Converts dodecanoic acid to 5-hydroxydodecanoic acid which can be further converted into delta-dodecalactone by lactonization of the 5-hydroxy acid at low pH. Also gives sub-terminal hydroxylation of dodecanoic acid with 9-hydroxydodecanoic acid being the second most abundant product. The protein is Self-sufficient cytochrome P450 monooxygenase CYP505E4 of Penicillium freii.